Here is an 859-residue protein sequence, read N- to C-terminus: Volume-regulated anion channel subunit LRRC8D (859 aa).

Residues 1 to 22 (MFTLAEVASLNDIQPTYRILKP) lie on the Cytoplasmic side of the membrane. A helical transmembrane segment spans residues 23–48 (WWDVFMDYLAVVMLMVAIFAGTMQLT). Residues 49–164 (KDQVVCLPVL…YHLALPWYSK (116 aa)) lie on the Extracellular side of the membrane. A disulfide bond links Cys54 and Cys355. Residues 110–138 (IPLQATHPHAESTLPNQEAKKEKRDPTGR) are disordered. The segment covering 127–138 (EAKKEKRDPTGR) has biased composition (basic and acidic residues). Residues 165 to 183 (YFPYLALIHTIILMVSSNF) traverse the membrane as a helical segment. At 184-309 (WFKYPKTCSK…EDSDLIYKLY (126 aa)) the chain is on the cytoplasmic side. The tract at residues 222-252 (SEENKQRITGAQTLPKHVSTSSDEGSPSAST) is disordered. Over residues 228-252 (RITGAQTLPKHVSTSSDEGSPSAST) the composition is skewed to polar residues. 3 positions are modified to phosphoserine: Ser242, Ser243, and Ser247. The chain crosses the membrane as a helical span at residues 310 to 331 (VVQTLIKTAKFIFILCYTANFV). Over 332–361 (NAISFEHVCKPKVEHLTGYEVFECTHNMAY) the chain is Extracellular. Residues 362 to 387 (MLKKLLISYISIICVYGFICLYTLFW) form a helical membrane-spanning segment. At 388-859 (LFRIPLKEYS…DVNVPFANGI (472 aa)) the chain is on the cytoplasmic side. 13 LRR repeats span residues 515–535 (NLQE…AFSF), 539–560 (HLRC…VYLL), 562–583 (NLRE…IGLE), 590–610 (HLKI…ITDV), 613–633 (HLTK…NSLK), 637–658 (NVAE…IFSL), 660–681 (NLQE…ISFQ), 685–706 (RLTC…ITHV), 708–729 (NLES…VFSL), 731–752 (KLRC…IGLL), 754–775 (NLQH…LFKC), 777–798 (KLRT…ISQL), and 800–821 (QLTQ…LGQC).

This sequence belongs to the LRRC8 family. Heterohexamer; oligomerizes with other LRRC8 proteins (LRRC8A, LRRC8B, LRRC8C and/or LRRC8E) to form a heterohexamer. In vivo, the subunit composition may depend primarily on expression levels, and heterooligomeric channels containing various proportions of the different LRRC8 proteins may coexist. Expressed in pancreatic beta cells. Also expressed in glucagon-secreting pancreatic alpha cells.

The protein localises to the cell membrane. The protein resides in the endoplasmic reticulum membrane. It catalyses the reaction chloride(in) = chloride(out). The enzyme catalyses iodide(out) = iodide(in). The catalysed reaction is taurine(out) = taurine(in). In terms of biological role, non-essential component of the volume-regulated anion channel (VRAC, also named VSOAC channel), an anion channel required to maintain a constant cell volume in response to extracellular or intracellular osmotic changes. The VRAC channel conducts iodide better than chloride and can also conduct organic osmolytes like taurine. Plays a redundant role in the efflux of amino acids, such as aspartate, in response to osmotic stress family member (LRRC8B, LRRC8C, LRRC8D or LRRC8E); channel characteristics depend on the precise subunit composition. Also acts as a regulator of glucose-sensing in pancreatic beta cells: VRAC currents, generated in response to hypotonicity- or glucose-induced beta cell swelling, depolarize cells, thereby causing electrical excitation, leading to increase glucose sensitivity and insulin secretion. VRAC channels containing LRRC8D inhibit transport of immunoreactive cyclic dinucleotide GMP-AMP (2'-3'-cGAMP), an immune messenger produced in response to DNA virus in the cytosol. The sequence is that of Volume-regulated anion channel subunit LRRC8D from Mus musculus (Mouse).